Reading from the N-terminus, the 68-residue chain is Large ribosomal subunit protein uL29 (68 aa).

This sequence belongs to the universal ribosomal protein uL29 family.

The polypeptide is Large ribosomal subunit protein uL29 (Chloroflexus aggregans (strain MD-66 / DSM 9485)).